Reading from the N-terminus, the 365-residue chain is Peptide chain release factor 2 (365 aa).

At Q252 the chain carries N5-methylglutamine.

The protein belongs to the prokaryotic/mitochondrial release factor family. Methylated by PrmC. Methylation increases the termination efficiency of RF2.

The protein resides in the cytoplasm. Its function is as follows. Peptide chain release factor 2 directs the termination of translation in response to the peptide chain termination codons UGA and UAA. In Aliivibrio fischeri (strain ATCC 700601 / ES114) (Vibrio fischeri), this protein is Peptide chain release factor 2.